The sequence spans 185 residues: ATP-dependent protease subunit HslV (185 aa).

The active site involves threonine 12. Na(+) is bound by residues alanine 168, cysteine 171, and threonine 174.

It belongs to the peptidase T1B family. HslV subfamily. A double ring-shaped homohexamer of HslV is capped on each side by a ring-shaped HslU homohexamer. The assembly of the HslU/HslV complex is dependent on binding of ATP.

It is found in the cytoplasm. It catalyses the reaction ATP-dependent cleavage of peptide bonds with broad specificity.. Its activity is regulated as follows. Allosterically activated by HslU binding. Protease subunit of a proteasome-like degradation complex believed to be a general protein degrading machinery. This Ruegeria pomeroyi (strain ATCC 700808 / DSM 15171 / DSS-3) (Silicibacter pomeroyi) protein is ATP-dependent protease subunit HslV.